A 430-amino-acid polypeptide reads, in one-letter code: tRNA(Ile)-lysidine synthase (430 aa).

27–32 is an ATP binding site; it reads SGGSDS.

This sequence belongs to the tRNA(Ile)-lysidine synthase family.

Its subcellular location is the cytoplasm. It carries out the reaction cytidine(34) in tRNA(Ile2) + L-lysine + ATP = lysidine(34) in tRNA(Ile2) + AMP + diphosphate + H(+). Its function is as follows. Ligates lysine onto the cytidine present at position 34 of the AUA codon-specific tRNA(Ile) that contains the anticodon CAU, in an ATP-dependent manner. Cytidine is converted to lysidine, thus changing the amino acid specificity of the tRNA from methionine to isoleucine. The chain is tRNA(Ile)-lysidine synthase from Rickettsia akari (strain Hartford).